Here is a 331-residue protein sequence, read N- to C-terminus: Doxorubicin resistance ATP-binding protein DrrA (331 aa).

One can recognise an ABC transporter domain in the interval 8–240 (VVVNGVRKTY…AGDTFCEIVP (233 aa)). 42 to 49 (GPNGAGKT) lines the ATP pocket.

Belongs to the ABC transporter superfamily. Drug exporter-1 (DrugE1) (TC 3.A.1.105) family. In terms of assembly, the complex is composed of two ATP-binding proteins (DrrA) and two transmembrane proteins (DrrB and DrrC).

It is found in the cell membrane. In terms of biological role, part of the ABC transporter complex DrrABC involved in doxorubicin resistance. Responsible for energy coupling to the transport system. Binds ATP. The sequence is that of Doxorubicin resistance ATP-binding protein DrrA (drrA) from Mycobacterium tuberculosis (strain CDC 1551 / Oshkosh).